A 165-amino-acid chain; its full sequence is Phosphopantetheine adenylyltransferase (165 aa).

Thr-9 serves as a coordination point for substrate. ATP-binding positions include 9-10 (TF) and His-17. Substrate is bound by residues Lys-41, Leu-73, and Arg-87. ATP-binding positions include 88–90 (GLR), Glu-98, and 123–129 (YQFISGT).

Belongs to the bacterial CoaD family. Homohexamer. The cofactor is Mg(2+).

It is found in the cytoplasm. The catalysed reaction is (R)-4'-phosphopantetheine + ATP + H(+) = 3'-dephospho-CoA + diphosphate. The protein operates within cofactor biosynthesis; coenzyme A biosynthesis; CoA from (R)-pantothenate: step 4/5. In terms of biological role, reversibly transfers an adenylyl group from ATP to 4'-phosphopantetheine, yielding dephospho-CoA (dPCoA) and pyrophosphate. This Burkholderia lata (strain ATCC 17760 / DSM 23089 / LMG 22485 / NCIMB 9086 / R18194 / 383) protein is Phosphopantetheine adenylyltransferase.